The sequence spans 642 residues: Threonine--tRNA ligase (642 aa).

Positions 1 to 61 constitute a TGS domain; the sequence is MPIITLPDGS…SEDANLEIIT (61 aa). The tract at residues 243–534 is catalytic; that stretch reads DHRKIGKALD…ITEEYAGFFP (292 aa). Zn(2+)-binding residues include Cys-334, His-385, and His-511.

Belongs to the class-II aminoacyl-tRNA synthetase family. Homodimer. Zn(2+) is required as a cofactor.

The protein localises to the cytoplasm. It carries out the reaction tRNA(Thr) + L-threonine + ATP = L-threonyl-tRNA(Thr) + AMP + diphosphate + H(+). Its function is as follows. Catalyzes the attachment of threonine to tRNA(Thr) in a two-step reaction: L-threonine is first activated by ATP to form Thr-AMP and then transferred to the acceptor end of tRNA(Thr). Also edits incorrectly charged L-seryl-tRNA(Thr). The protein is Threonine--tRNA ligase of Histophilus somni (strain 129Pt) (Haemophilus somnus).